We begin with the raw amino-acid sequence, 539 residues long: uncharacterized protein (539 aa).

The tract at residues 34 to 63 (AASEVSPIPQERPTTSLRKPTPRVQRPATD) is disordered. 11 helical membrane passes run 103-123 (FATP…TTVF), 141-161 (MTAT…LDTV), 184-204 (ILLL…GILL), 244-264 (GIFH…IFLN), 277-299 (FLGA…IIYI), 325-345 (LAVP…LVTF), 360-380 (VLST…AAAA), 399-419 (THVS…ILFL), 434-454 (VVAL…ADNT), 470-490 (IGGV…AIIL), and 496-516 (WGLY…AGVE).

This sequence belongs to the multi antimicrobial extrusion (MATE) (TC 2.A.66.1) family.

Its subcellular location is the vacuole membrane. This is an uncharacterized protein from Schizosaccharomyces pombe (strain 972 / ATCC 24843) (Fission yeast).